Reading from the N-terminus, the 177-residue chain is MSRVAKAPVVVPAGVDVKINGQVITIKGKNGELTRTLNDAVEVKHADNTLTFGPRDGYADGWAQAGTARALLNSMVIGVTEGFTKKLQLVGVGYRAAVKGNVVNLSLGFSHPVDHQLPAGITAECPTQTEIVLKGADKQVIGQVAADLRAYRRPEPYKGKGVRYADEVVRTKEAKKK.

An N6-acetyllysine modification is found at Lys44.

It belongs to the universal ribosomal protein uL6 family. In terms of assembly, part of the 50S ribosomal subunit.

Its function is as follows. This protein binds to the 23S rRNA, and is important in its secondary structure. It is located near the subunit interface in the base of the L7/L12 stalk, and near the tRNA binding site of the peptidyltransferase center. In Escherichia fergusonii (strain ATCC 35469 / DSM 13698 / CCUG 18766 / IAM 14443 / JCM 21226 / LMG 7866 / NBRC 102419 / NCTC 12128 / CDC 0568-73), this protein is Large ribosomal subunit protein uL6.